The chain runs to 440 residues: 2-methylisoborneol synthase (440 aa).

2 disordered regions span residues 1–33 and 46–74; these read MPDSGTLGTPPPEQGPTPPTTLPDVPAPVIPSA and LHPPVTVPDPAPPPPPAPAAGNPPDTVTG. Pro residues-rich tracts occupy residues 9 to 29 and 50 to 63; these read TPPPEQGPTPPTTLPDVPAPV and VTVPDPAPPPPPAP. Residues aspartate 197, aspartate 198, glutamate 202, asparagine 345, serine 349, and glutamate 353 each coordinate Mg(2+).

The protein belongs to the terpene synthase family. 2-methylisoborneol synthase subfamily. Mg(2+) is required as a cofactor.

The enzyme catalyses (E)-2-methylgeranyl diphosphate + H2O = 2-methylisoborneol + diphosphate. In terms of biological role, catalyzes the cyclization of 2-methylgeranyl diphosphate (2-MeGPP) to 2-methylisoborneol (2-MIB), which likely involves the intermediacy of 2-methyllinalyl diphosphate. Is also able to catalyze the cyclization of geranyl diphosphate (GPP), albeit with much lower efficiency, leading to the formation of a complex mixture of cyclic monoterpenes, consisting of alpha-pinene (6%), beta-pinene (23%), limonene (32%), gamma-terpinene (29%), and delta-terpinene (10%). The chain is 2-methylisoborneol synthase from Streptomyces coelicolor (strain ATCC BAA-471 / A3(2) / M145).